Reading from the N-terminus, the 209-residue chain is 2-phospho-L-lactate guanylyltransferase (209 aa).

Belongs to the CofC family. As to quaternary structure, homodimer.

It catalyses the reaction (2S)-2-phospholactate + GTP + H(+) = (2S)-lactyl-2-diphospho-5'-guanosine + diphosphate. It participates in cofactor biosynthesis; coenzyme F420 biosynthesis. Functionally, guanylyltransferase that catalyzes the activation of (2S)-2-phospholactate (2-PL) as (2S)-lactyl-2-diphospho-5'-guanosine, via the condensation of 2-PL with GTP. It is involved in the biosynthesis of coenzyme F420, a hydride carrier cofactor. This Halobacterium salinarum (strain ATCC 29341 / DSM 671 / R1) protein is 2-phospho-L-lactate guanylyltransferase.